The following is a 310-amino-acid chain: tRNA dimethylallyltransferase (310 aa).

ATP is bound at residue 11–18 (GPTAVGKT). A substrate-binding site is contributed by 13–18 (TAVGKT). The tract at residues 36 to 39 (DSMQ) is interaction with substrate tRNA.

The protein belongs to the IPP transferase family. Monomer. The cofactor is Mg(2+).

It catalyses the reaction adenosine(37) in tRNA + dimethylallyl diphosphate = N(6)-dimethylallyladenosine(37) in tRNA + diphosphate. Functionally, catalyzes the transfer of a dimethylallyl group onto the adenine at position 37 in tRNAs that read codons beginning with uridine, leading to the formation of N6-(dimethylallyl)adenosine (i(6)A). The protein is tRNA dimethylallyltransferase of Shouchella clausii (strain KSM-K16) (Alkalihalobacillus clausii).